The following is a 713-amino-acid chain: Ribosomal RNA large subunit methyltransferase K/L (713 aa).

The THUMP domain occupies 43-154; that stretch reads LAYRITLWTR…NGVITIAMNF (112 aa).

Belongs to the methyltransferase superfamily. RlmKL family.

Its subcellular location is the cytoplasm. It carries out the reaction guanosine(2445) in 23S rRNA + S-adenosyl-L-methionine = N(2)-methylguanosine(2445) in 23S rRNA + S-adenosyl-L-homocysteine + H(+). The enzyme catalyses guanosine(2069) in 23S rRNA + S-adenosyl-L-methionine = N(2)-methylguanosine(2069) in 23S rRNA + S-adenosyl-L-homocysteine + H(+). Its function is as follows. Specifically methylates the guanine in position 2445 (m2G2445) and the guanine in position 2069 (m7G2069) of 23S rRNA. This chain is Ribosomal RNA large subunit methyltransferase K/L, found in Shewanella sp. (strain MR-4).